A 632-amino-acid polypeptide reads, in one-letter code: tRNA uridine 5-carboxymethylaminomethyl modification enzyme MnmG (632 aa).

FAD-binding positions include 13–18, valine 125, and serine 180; that span reads GGGHAG. NAD(+) is bound at residue 273 to 287; sequence GPRYCPSIEDKVMRF. Glutamine 370 provides a ligand contact to FAD.

The protein belongs to the MnmG family. In terms of assembly, homodimer. Heterotetramer of two MnmE and two MnmG subunits. It depends on FAD as a cofactor.

Its subcellular location is the cytoplasm. Functionally, NAD-binding protein involved in the addition of a carboxymethylaminomethyl (cmnm) group at the wobble position (U34) of certain tRNAs, forming tRNA-cmnm(5)s(2)U34. The sequence is that of tRNA uridine 5-carboxymethylaminomethyl modification enzyme MnmG from Proteus mirabilis (strain HI4320).